A 240-amino-acid chain; its full sequence is Vacuolar-sorting protein SNF7 (240 aa).

Thr-72 is modified (phosphothreonine). Phosphoserine occurs at positions 119 and 193. Residues Ser-193 to Leu-240 are disordered. The segment covering Asn-195 to Asn-212 has biased composition (polar residues). A compositionally biased stretch (acidic residues) spans Gly-217 to Glu-228. Residue Lys-229 forms a Glycyl lysine isopeptide (Lys-Gly) (interchain with G-Cter in ubiquitin) linkage. Over residues Lys-229–Leu-240 the composition is skewed to basic and acidic residues.

The protein belongs to the SNF7 family. Core component of the ESCRT-III complex (endosomal sorting required for transport complex III). ESCRT-III appears to be sequentially assembled as a flat lattice on the endosome membrane and forms a transient 450 kDa complex that contains DID4, oligomerized SNF7, VPS20 and VPS24. SNF7 polymerizes into spirals at the surface of lipid bilayers. SNF7 polymerization is nucleated by association of SNF7 with VPS20; the process is terminated through association of VPS24, possibly by capping the SNF7 filament. Interacts with VTA1; the interaction requires DID2. Interacts with BRO1. Interacts with DOA4. Interacts with HEH1 and HEH2. Interacts with RIM20 and YGR122W.

The protein resides in the cytoplasm. The protein localises to the endosome membrane. It is found in the nucleus envelope. In terms of biological role, acts a component of the ESCRT-III complex required for the sorting and concentration of proteins resulting in the entry of these proteins into the invaginating vesicles of the multivesicular body (MVB). The sequential action of ESCRT-0, -I, and -II together with the ordered assembly of ESCRT-III links membrane invagination to cargo sorting. Membrane scission in the neck of the growing vesicle releases mature, cargo-laden ILVs into the lumen. ESCRT-III is critical for late steps in MVB sorting, such as membrane invagination and final cargo sorting and recruitment of late-acting components of the sorting machinery. SNF7 is the most abundant ESCRT-III subunit which forms membrane-sculpting filaments with 30 Angstrom periodicity and a exposed cationic membrane-binding surface. Its activation requires a prominent conformational rearrangement to expose protein-membrane and protein-protein interfaces. SNF7 filaments then form spirals that could function as spiral springs. The elastic expansion of compressed SNF7 spirals generates an area difference between the two sides of the membrane and thus curvature which could be the origin of membrane deformation leading eventually to fission. SNF7 recruits BRO1, which in turn recruits DOA4, which deubiquitinates cargos before their enclosure within MVB vesicles. ESCRT-III is also recruited to the nuclear envelope (NE) by integral INM proteins to surveil and clear defective nuclear pore complex (NPC) assembly intermediates to ensure the fidelity of NPC assembly. This chain is Vacuolar-sorting protein SNF7, found in Saccharomyces cerevisiae (strain ATCC 204508 / S288c) (Baker's yeast).